Consider the following 538-residue polypeptide: Reticuline oxidase (538 aa).

The signal sequence occupies residues 1–23 (MENKTPIFFSLSIFLSLLNCALG). Residues Cys-30 and Cys-89 are joined by a disulfide bond. The N-linked (GlcNAc...) asparagine glycan is linked to Asn-38. The 175-residue stretch at 67–241 (LISKPSAIIL…YAWKIKLLPV (175 aa)) folds into the FAD-binding PCMH-type domain. Positions 104-166 (HSYEGLSYTS…SKLGFTAGWC (63 aa)) form a cross-link, 6-(S-cysteinyl)-8alpha-(pros-histidyl)-FAD (His-Cys). Residues Asn-423 and Asn-471 are each glycosylated (N-linked (GlcNAc...) asparagine).

Belongs to the oxygen-dependent FAD-linked oxidoreductase family. It depends on FAD as a cofactor. Requires a metal cation as cofactor. In terms of processing, the FAD cofactor is bound via a bicovalent 6-S-cysteinyl, 8alpha-N1-histidyl FAD linkage.

It localises to the cytoplasmic vesicle. The enzyme catalyses (S)-reticuline + O2 = (S)-scoulerine + H2O2 + H(+). It functions in the pathway alkaloid biosynthesis; (S)-scoulerine biosynthesis; (S)-scoulerine from (S)-reticuline: step 1/1. Essential to the formation of benzophenanthridine alkaloids in the response of plants to pathogenic attack. Catalyzes the stereospecific conversion of the N-methyl moiety of (S)-reticuline into the berberine bridge carbon of (S)-scoulerine. The chain is Reticuline oxidase (BBE1) from Eschscholzia californica (California poppy).